Consider the following 217-residue polypeptide: Deoxyribose-phosphate aldolase (217 aa).

Asp-89 functions as the Proton donor/acceptor in the catalytic mechanism. Residue Lys-151 is the Schiff-base intermediate with acetaldehyde of the active site. Lys-180 acts as the Proton donor/acceptor in catalysis.

This sequence belongs to the DeoC/FbaB aldolase family. DeoC type 1 subfamily.

It localises to the cytoplasm. The catalysed reaction is 2-deoxy-D-ribose 5-phosphate = D-glyceraldehyde 3-phosphate + acetaldehyde. It functions in the pathway carbohydrate degradation; 2-deoxy-D-ribose 1-phosphate degradation; D-glyceraldehyde 3-phosphate and acetaldehyde from 2-deoxy-alpha-D-ribose 1-phosphate: step 2/2. Catalyzes a reversible aldol reaction between acetaldehyde and D-glyceraldehyde 3-phosphate to generate 2-deoxy-D-ribose 5-phosphate. In Metamycoplasma arthritidis (strain 158L3-1) (Mycoplasma arthritidis), this protein is Deoxyribose-phosphate aldolase.